Here is a 145-residue protein sequence, read N- to C-terminus: Large ribosomal subunit protein uL11 (145 aa).

It belongs to the universal ribosomal protein uL11 family. As to quaternary structure, part of the ribosomal stalk of the 50S ribosomal subunit. Interacts with L10 and the large rRNA to form the base of the stalk. L10 forms an elongated spine to which L12 dimers bind in a sequential fashion forming a multimeric L10(L12)X complex. In terms of processing, one or more lysine residues are methylated.

Its function is as follows. Forms part of the ribosomal stalk which helps the ribosome interact with GTP-bound translation factors. This chain is Large ribosomal subunit protein uL11, found in Rickettsia canadensis (strain McKiel).